A 396-amino-acid chain; its full sequence is Pre-mRNA-splicing regulator WTAP (396 aa).

An N-acetylmethionine modification is found at Met1. At Ser14 the chain carries Phosphoserine. 3 stretches are compositionally biased toward low complexity: residues 240-257 (QQQQSQASAPSTSRTTAS), 278-291 (SNGSSSRQRTSGSG), and 304-316 (PSSPGNGNKSSNS). Residues 240–396 (QQQQSQASAP…SSVNVQGSVL (157 aa)) form a disordered region. Residues Ser305, Ser306, and Ser341 each carry the phosphoserine modification. A compositionally biased stretch (polar residues) spans 340–356 (DSPTGSENSLTHQSNDT). At Thr350 the chain carries Phosphothreonine. A compositionally biased stretch (basic and acidic residues) spans 357–368 (DSSHDPQEEKAV). Polar residues predominate over residues 380 to 396 (HVQNGLDSSVNVQGSVL). Phosphoserine is present on Ser388.

The protein belongs to the fl(2)d family. In terms of assembly, component of the WMM complex, a N6-methyltransferase complex composed of a catalytic subcomplex, named MAC, and of an associated subcomplex, named MACOM. The MAC subcomplex is composed of METTL3 and METTL14. The MACOM subcomplex is composed of WTAP, ZC3H13, CBLL1/HAKAI, VIRMA, and, in some cases of RBM15 (RBM15 or RBM15B). Interacts with WT1. Also a component of a MACOM-like complex, named WTAP complex, composed of WTAP, ZC3H13, CBLL1, VIRMA, RBM15, BCLAF1 and THRAP3. As to expression, ubiquitously expressed.

Its subcellular location is the nucleus speckle. The protein localises to the nucleus. The protein resides in the nucleoplasm. It is found in the cytoplasm. Its function is as follows. Associated component of the WMM complex, a complex that mediates N6-methyladenosine (m6A) methylation of RNAs, a modification that plays a role in the efficiency of mRNA splicing and RNA processing. Required for accumulation of METTL3 and METTL14 to nuclear speckle. Acts as a mRNA splicing regulator. Regulates G2/M cell-cycle transition by binding to the 3' UTR of CCNA2, which enhances its stability. Impairs WT1 DNA-binding ability and inhibits expression of WT1 target genes. The sequence is that of Pre-mRNA-splicing regulator WTAP from Homo sapiens (Human).